Here is a 117-residue protein sequence, read N- to C-terminus: Immunoglobulin lambda variable 1-47 (117 aa).

The first 19 residues, 1–19 (MAGFPLLLTLLTHCAGSWA), serve as a signal peptide directing secretion. Pyrrolidone carboxylic acid is present on Q20. Positions 20–44 (QSVLTQPPSASGTPGQRVTISCSGS) are framework-1. The Ig-like domain maps to 20 to 117 (QSVLTQPPSA…CAAWDDSLSG (98 aa)). An intrachain disulfide couples C41 to C108. The segment at 45-52 (SSNIGSNY) is complementarity-determining-1. The interval 53–69 (VYWYQQLPGTAPKLLIY) is framework-2. The tract at residues 70 to 72 (SNN) is complementarity-determining-2. A framework-3 region spans residues 73-108 (QRPSGVPDRFSGSKSGTSASLAISGLRSEDEADYYC). The complementarity-determining-3 stretch occupies residues 109-117 (AAWDDSLSG).

As to quaternary structure, immunoglobulins are composed of two identical heavy chains and two identical light chains; disulfide-linked.

The protein localises to the secreted. The protein resides in the cell membrane. In terms of biological role, v region of the variable domain of immunoglobulin light chains that participates in the antigen recognition. Immunoglobulins, also known as antibodies, are membrane-bound or secreted glycoproteins produced by B lymphocytes. In the recognition phase of humoral immunity, the membrane-bound immunoglobulins serve as receptors which, upon binding of a specific antigen, trigger the clonal expansion and differentiation of B lymphocytes into immunoglobulins-secreting plasma cells. Secreted immunoglobulins mediate the effector phase of humoral immunity, which results in the elimination of bound antigens. The antigen binding site is formed by the variable domain of one heavy chain, together with that of its associated light chain. Thus, each immunoglobulin has two antigen binding sites with remarkable affinity for a particular antigen. The variable domains are assembled by a process called V-(D)-J rearrangement and can then be subjected to somatic hypermutations which, after exposure to antigen and selection, allow affinity maturation for a particular antigen. The protein is Immunoglobulin lambda variable 1-47 of Homo sapiens (Human).